The following is a 270-amino-acid chain: MSTNNTIKTPYEDLLRTILEQGSHKDDRTGTGTTSLFGQQMRFDLTEAFPLITTKKVYWKGVIGELLWFLQGSSNVRWLQKRNIHIWDEWASEEGELGPVYGVQWRSWPTPDGQHVDQIAQALDILKNNPDSRRNIVSAWNVADLNNMALPPCHLLFQLYVADGKLSCQLYQRSADMFLGVPFNIASYSALTHMLAQQAGLKVGEFIWTGGDCHIYDNHREQVLTQLSREPRPYPQLTLRKASSIFDYDFDDFTIEGYDPHPAIRGEVAV.

DUMP is bound by residues arginine 28 and 133–134; that span reads RR. Cysteine 153 (nucleophile) is an active-site residue. Residues 173 to 176, asparagine 184, and 214 to 216 contribute to the dUMP site; these read RSAD and HIY. Aspartate 176 contacts (6R)-5,10-methylene-5,6,7,8-tetrahydrofolate. Position 269 (alanine 269) interacts with (6R)-5,10-methylene-5,6,7,8-tetrahydrofolate.

This sequence belongs to the thymidylate synthase family. Bacterial-type ThyA subfamily. In terms of assembly, homodimer.

It is found in the cytoplasm. It carries out the reaction dUMP + (6R)-5,10-methylene-5,6,7,8-tetrahydrofolate = 7,8-dihydrofolate + dTMP. Its pathway is pyrimidine metabolism; dTTP biosynthesis. Functionally, catalyzes the reductive methylation of 2'-deoxyuridine-5'-monophosphate (dUMP) to 2'-deoxythymidine-5'-monophosphate (dTMP) while utilizing 5,10-methylenetetrahydrofolate (mTHF) as the methyl donor and reductant in the reaction, yielding dihydrofolate (DHF) as a by-product. This enzymatic reaction provides an intracellular de novo source of dTMP, an essential precursor for DNA biosynthesis. This Corynebacterium diphtheriae (strain ATCC 700971 / NCTC 13129 / Biotype gravis) protein is Thymidylate synthase.